Consider the following 291-residue polypeptide: Ribosomal RNA small subunit methyltransferase A (291 aa).

Asparagine 28, leucine 30, glycine 55, glutamate 77, aspartate 103, and asparagine 123 together coordinate S-adenosyl-L-methionine.

It belongs to the class I-like SAM-binding methyltransferase superfamily. rRNA adenine N(6)-methyltransferase family. RsmA subfamily.

The protein localises to the cytoplasm. The catalysed reaction is adenosine(1518)/adenosine(1519) in 16S rRNA + 4 S-adenosyl-L-methionine = N(6)-dimethyladenosine(1518)/N(6)-dimethyladenosine(1519) in 16S rRNA + 4 S-adenosyl-L-homocysteine + 4 H(+). Functionally, specifically dimethylates two adjacent adenosines (A1518 and A1519) in the loop of a conserved hairpin near the 3'-end of 16S rRNA in the 30S particle. May play a critical role in biogenesis of 30S subunits. In Azorhizobium caulinodans (strain ATCC 43989 / DSM 5975 / JCM 20966 / LMG 6465 / NBRC 14845 / NCIMB 13405 / ORS 571), this protein is Ribosomal RNA small subunit methyltransferase A.